The sequence spans 102 residues: Aspartyl/glutamyl-tRNA(Asn/Gln) amidotransferase subunit C (102 aa).

This sequence belongs to the GatC family. As to quaternary structure, heterotrimer of A, B and C subunits.

The catalysed reaction is L-glutamyl-tRNA(Gln) + L-glutamine + ATP + H2O = L-glutaminyl-tRNA(Gln) + L-glutamate + ADP + phosphate + H(+). The enzyme catalyses L-aspartyl-tRNA(Asn) + L-glutamine + ATP + H2O = L-asparaginyl-tRNA(Asn) + L-glutamate + ADP + phosphate + 2 H(+). Functionally, allows the formation of correctly charged Asn-tRNA(Asn) or Gln-tRNA(Gln) through the transamidation of misacylated Asp-tRNA(Asn) or Glu-tRNA(Gln) in organisms which lack either or both of asparaginyl-tRNA or glutaminyl-tRNA synthetases. The reaction takes place in the presence of glutamine and ATP through an activated phospho-Asp-tRNA(Asn) or phospho-Glu-tRNA(Gln). The polypeptide is Aspartyl/glutamyl-tRNA(Asn/Gln) amidotransferase subunit C (Mycobacteroides abscessus (strain ATCC 19977 / DSM 44196 / CCUG 20993 / CIP 104536 / JCM 13569 / NCTC 13031 / TMC 1543 / L948) (Mycobacterium abscessus)).